The chain runs to 188 residues: Transcription factor FapR (188 aa).

It belongs to the FapR family.

Functionally, transcriptional factor involved in regulation of membrane lipid biosynthesis by repressing genes involved in fatty acid and phospholipid metabolism. The protein is Transcription factor FapR of Bacillus velezensis (strain DSM 23117 / BGSC 10A6 / LMG 26770 / FZB42) (Bacillus amyloliquefaciens subsp. plantarum).